The sequence spans 449 residues: Chromosomal replication initiator protein DnaA (449 aa).

Residues 1-83 form a domain I, interacts with DnaA modulators region; the sequence is MDDSLWSACL…VELEIGSPPT (83 aa). The tract at residues 77–114 is disordered; that stretch reads EIGSPPTPDQREAATGATRAAPAQRSSEPRQRPVDSNL. Positions 83–112 are domain II; that stretch reads TPDQREAATGATRAAPAQRSSEPRQRPVDS. Residues 89 to 99 show a composition bias toward low complexity; that stretch reads AATGATRAAPA. The tract at residues 113 to 329 is domain III, AAA+ region; that stretch reads NLNPGFTFDS…GALRRITANA (217 aa). ATP is bound by residues Gly157, Gly159, Lys160, and Thr161. Residues 330–449 are domain IV, binds dsDNA; it reads QFTGRAIDVD…YDNLLRTLST (120 aa).

The protein belongs to the DnaA family. In terms of assembly, oligomerizes as a right-handed, spiral filament on DNA at oriC.

It is found in the cytoplasm. In terms of biological role, plays an essential role in the initiation and regulation of chromosomal replication. ATP-DnaA binds to the origin of replication (oriC) to initiate formation of the DNA replication initiation complex once per cell cycle. Binds the DnaA box (a 9 base pair repeat at the origin) and separates the double-stranded (ds)DNA. Forms a right-handed helical filament on oriC DNA; dsDNA binds to the exterior of the filament while single-stranded (ss)DNA is stabiized in the filament's interior. The ATP-DnaA-oriC complex binds and stabilizes one strand of the AT-rich DNA unwinding element (DUE), permitting loading of DNA polymerase. After initiation quickly degrades to an ADP-DnaA complex that is not apt for DNA replication. Binds acidic phospholipids. The sequence is that of Chromosomal replication initiator protein DnaA from Halorhodospira halophila (strain DSM 244 / SL1) (Ectothiorhodospira halophila (strain DSM 244 / SL1)).